We begin with the raw amino-acid sequence, 483 residues long: Cobyric acid synthase (483 aa).

The GATase cobBQ-type domain maps to 248 to 434 (ALRVVVPVLP…LHGLFEQPSA (187 aa)). Cysteine 329 functions as the Nucleophile in the catalytic mechanism. Residue histidine 426 is part of the active site.

The protein belongs to the CobB/CobQ family. CobQ subfamily.

It functions in the pathway cofactor biosynthesis; adenosylcobalamin biosynthesis. Catalyzes amidations at positions B, D, E, and G on adenosylcobyrinic A,C-diamide. NH(2) groups are provided by glutamine, and one molecule of ATP is hydrogenolyzed for each amidation. The chain is Cobyric acid synthase from Ectopseudomonas mendocina (strain ymp) (Pseudomonas mendocina).